A 743-amino-acid chain; its full sequence is MAGEDRVEQESSVPADVREKHALLAEQIEEHRFRYYVKDQPVVSDADFDRQLRSLEALEEEHPSLRTPDSPTQKVAGPYRTEFTSVEHRERMLSLDNAFDDEELAAWADRVAKDVGTPDHHFLCELKVDGLAVNLTYEHGRLTRAATRGDGRTGEDITPNVRTIAEIPHRLKGEDIPALVEIRGEVFFPMEDFEELNARLVAADDKPFANPRNAAAGSLRQKDPKVTATRPLHMVVHGIGAHEGLSIDRLSAAYDLLHTWGLPTARHNKVVDSLAGVREFIAHYGENRHSVEHEIDGVVVKLDEIPLQGRLGSTSRAPRWAIAWKYAPEEVNTKLVNIRVGVGRTGRVTPYAQVEPVEVAGSEVEFATLHNQNVVKAKGVLIGDTVVIRKAGEVIPEILGPVVDLRDGTEKAFEMPTHCPECGTELRPMKEADIDLRCPNARTCPAQLRERVFYLAGRKSLDIDHFGYVAAAALTRPLEPAEPVLKDESDLFSLTVEQLLPIRAYVLDQDSGLPKRDPKTGEEKIATVFANQQGEPKKNAVAMLEGIAAAKDAPLARVLTGLSIRHVGPVAAQELARQFRSIERIDEATEEELAAADGVGPTIAASVKQWFAEDWHREIVRKWREAGVRMADEGSDEDEGPRPLEGLTVVVTGTLAGHTRDGAKEALQALGAKVAGSVSKKTAFVVVGDNPGSKYDKAMQLKVPVLDEDGFAILLEQGPERAKEAALPVPEAAPAADPENSGE.

Residues 45–49 (DADFD), 94–95 (SL), and glutamate 125 contribute to the NAD(+) site. Lysine 127 functions as the N6-AMP-lysine intermediate in the catalytic mechanism. NAD(+) contacts are provided by arginine 148, glutamate 185, lysine 301, and lysine 325. Residues cysteine 419, cysteine 422, cysteine 438, and cysteine 444 each contribute to the Zn(2+) site. Residues 639 to 728 (EGPRPLEGLT…PERAKEAALP (90 aa)) enclose the BRCT domain. The tract at residues 720-743 (ERAKEAALPVPEAAPAADPENSGE) is disordered. Residues 725-743 (AALPVPEAAPAADPENSGE) show a composition bias toward low complexity.

Belongs to the NAD-dependent DNA ligase family. LigA subfamily. Mg(2+) is required as a cofactor. It depends on Mn(2+) as a cofactor.

It catalyses the reaction NAD(+) + (deoxyribonucleotide)n-3'-hydroxyl + 5'-phospho-(deoxyribonucleotide)m = (deoxyribonucleotide)n+m + AMP + beta-nicotinamide D-nucleotide.. Functionally, DNA ligase that catalyzes the formation of phosphodiester linkages between 5'-phosphoryl and 3'-hydroxyl groups in double-stranded DNA using NAD as a coenzyme and as the energy source for the reaction. It is essential for DNA replication and repair of damaged DNA. In Streptomyces griseus subsp. griseus (strain JCM 4626 / CBS 651.72 / NBRC 13350 / KCC S-0626 / ISP 5235), this protein is DNA ligase 2.